A 258-amino-acid polypeptide reads, in one-letter code: 4-hydroxy-tetrahydrodipicolinate reductase (258 aa).

Residue 10 to 15 participates in NAD(+) binding; it reads GCLGRM. Lys-38 contributes to the NADP(+) binding site. Residues 89–91 and 113–116 contribute to the NAD(+) site; these read GTT and AGNM. His-146 serves as the catalytic Proton donor/acceptor. His-147 contributes to the (S)-2,3,4,5-tetrahydrodipicolinate binding site. The active-site Proton donor is the Lys-150. Residue 156–157 coordinates (S)-2,3,4,5-tetrahydrodipicolinate; that stretch reads GT.

It belongs to the DapB family.

It is found in the cytoplasm. The catalysed reaction is (S)-2,3,4,5-tetrahydrodipicolinate + NAD(+) + H2O = (2S,4S)-4-hydroxy-2,3,4,5-tetrahydrodipicolinate + NADH + H(+). It carries out the reaction (S)-2,3,4,5-tetrahydrodipicolinate + NADP(+) + H2O = (2S,4S)-4-hydroxy-2,3,4,5-tetrahydrodipicolinate + NADPH + H(+). Its pathway is amino-acid biosynthesis; L-lysine biosynthesis via DAP pathway; (S)-tetrahydrodipicolinate from L-aspartate: step 4/4. In terms of biological role, catalyzes the conversion of 4-hydroxy-tetrahydrodipicolinate (HTPA) to tetrahydrodipicolinate. The polypeptide is 4-hydroxy-tetrahydrodipicolinate reductase (Pelagibacter ubique (strain HTCC1062)).